The following is a 334-amino-acid chain: MDGVIVYCLNALVKHGEEINHIKNDFMIKPCCERVCEKVKNVHIGGQSKNNTVIADLPYMDNAVSDVCNSLYKKNVSRISRFANLIKIDDDDKTPTGVYNYFKPKDVIPVIISIGKDKDVCELLISSDISCACVELNSYKVAILPMDVSFFTKGNASLIILLFDFSIDAAPLLRSVTDNNVIISRHQRLHDELPSSNWFKFYISIKSDYCSILYMVVDGSVMHAIADNRTHAIISKNILDNTTINDECRCCYFEPQIRILDRDEMLNGSSCDMNRHCIMMNLPDVGEFGSSMLGKYEPDMIKIALSVAGNLIRNRDYIPGRRGYSYYVYGIASR.

The protein belongs to the orthopoxvirus OPG181 family.

The sequence is that of Protein OPG181 (OPG181) from Vaccinia virus (strain Copenhagen) (VACV).